The following is a 57-amino-acid chain: High-potential iron-sulfur protein (57 aa).

4 residues coordinate [4Fe-4S] cluster: cysteine 21, cysteine 24, cysteine 33, and cysteine 46.

Belongs to the high-potential iron-sulfur protein (HiPIP) family. Homodimer.

Specific class of high-redox-potential 4Fe-4S ferredoxins. Functions in anaerobic electron transport in most purple and in some other photosynthetic bacteria and in at least one genus (Paracoccus) of halophilic, denitrifying bacteria. This chain is High-potential iron-sulfur protein (hip), found in Rhodopila globiformis (Rhodopseudomonas globiformis).